The primary structure comprises 518 residues: Serine/threonine-protein kinase UL13 (518 aa).

Positions 1–119 (MDESRRQRPA…QAALTAPPSS (119 aa)) are disordered. The Protein kinase domain maps to 151 to 518 (PGARSFGGSG…TNPCARHALS (368 aa)). ATP contacts are provided by residues 157-165 (GGSGGYGDV) and Lys176. Asp277 (proton acceptor) is an active-site residue.

It belongs to the protein kinase superfamily. Ser/Thr protein kinase family. In terms of processing, autophosphorylated.

The protein resides in the virion tegument. The protein localises to the host nucleus. It catalyses the reaction L-seryl-[protein] + ATP = O-phospho-L-seryl-[protein] + ADP + H(+). It carries out the reaction L-threonyl-[protein] + ATP = O-phospho-L-threonyl-[protein] + ADP + H(+). Multifunctional serine/threonine kinase that plays a role in several processes including egress of virus particles from the nucleus, modulation of the actin cytoskeleton and regulation of viral and cellular gene expression. Regulates the nuclear localization of viral envelopment factors UL34 and UL31, by phosphorylating the US3 kinase, indicating a role in nuclear egress. Disrupts host nuclear lamins, including LMNA and LMNB1. Phosphorylates the viral Fc receptor composed of glycoproteins E (gE) and I (gI). Phosphorylation of glycoprotein E (gE) by UL13 alters its subcellular localization, from the host early endosome to the plasma membrane. Participates in the transcriptional regulation of cellular and viral mRNAs mainly by phosphorylating the viral transcriptional regulator ICP22. Additional substrates have been identified, including UL41, UL49 or host EF1D. The polypeptide is Serine/threonine-protein kinase UL13 (Homo sapiens (Human)).